Here is a 255-residue protein sequence, read N- to C-terminus: Poxin (255 aa).

Belongs to the poxin family. Highly divergent.

It catalyses the reaction 2',3'-cGAMP + H2O = Gp(2'-5')Ap(3') + H(+). Nuclease that cleaves 2',3'-cGAMP. The chain is Poxin from Bombyx mori (Silk moth).